A 456-amino-acid polypeptide reads, in one-letter code: Exodeoxyribonuclease 7 large subunit (456 aa).

This sequence belongs to the XseA family. As to quaternary structure, heterooligomer composed of large and small subunits.

The protein resides in the cytoplasm. It carries out the reaction Exonucleolytic cleavage in either 5'- to 3'- or 3'- to 5'-direction to yield nucleoside 5'-phosphates.. Its function is as follows. Bidirectionally degrades single-stranded DNA into large acid-insoluble oligonucleotides, which are then degraded further into small acid-soluble oligonucleotides. This Shigella flexneri serotype 5b (strain 8401) protein is Exodeoxyribonuclease 7 large subunit.